The following is a 1386-amino-acid chain: Lysophospholipase NTE1 (1386 aa).

Residues 1–19 are Cytoplasmic-facing; that stretch reads MGPEFEDSIPLVHSDNRTT. A helical transmembrane segment spans residues 20-40; sequence TIYSVYIIISDIFSFVQWLLF. The Lumenal segment spans residues 41–65; it reads KVLNLIIIDSPAFVLRLLSKNFEIN. The helical transmembrane segment at 66–86 threads the bilayer; the sequence is LHLSSILATLIGVSVVTYLVI. The Cytoplasmic portion of the chain corresponds to 87–1386; it reads RYKFLTGYSH…KKILYRRNSI (1300 aa). The interval 394–416 is disordered; sequence EAEAENLPKKLKHHHRNQLQRTT. Residues 402–411 show a composition bias toward basic residues; that stretch reads KKLKHHHRNQ. A nucleoside 3',5'-cyclic phosphate is bound by residues 577-701 and 697-821; these read KRLL…LKNL and KLKN…VASK. The PNPLA domain maps to 1081–1245; it reads LVLGGGGSRG…LDNLPVNEMK (165 aa). Positions 1085-1090 match the GXGXXG motif; that stretch reads GGGSRG. Positions 1112–1116 match the GXSXG motif; that stretch reads GTSIG. Catalysis depends on Ser-1114, which acts as the Nucleophile. Asp-1232 (proton acceptor) is an active-site residue. Residues 1232 to 1234 carry the DGA/G motif; that stretch reads DGG.

It belongs to the NTE family.

The protein localises to the endoplasmic reticulum membrane. The enzyme catalyses a 1-acyl-sn-glycero-3-phosphocholine + H2O = sn-glycerol 3-phosphocholine + a fatty acid + H(+). Its activity is regulated as follows. Inhibited by organophosphorus esters. In terms of biological role, intracellular phospholipase B that catalyzes the double deacylation of phosphatidylcholine (PC) to glycerophosphocholine (GroPCho). Plays an important role in membrane lipid homeostasis. Responsible for the rapid PC turnover in response to inositol, elevated temperatures, or when choline is present in the growth medium. The sequence is that of Lysophospholipase NTE1 (NTE1) from Candida albicans (strain SC5314 / ATCC MYA-2876) (Yeast).